Reading from the N-terminus, the 119-residue chain is MARVKRGVQARRRHKKILTLAKGYYNARRKVFRVAKQAVIKAQQYAYIGRKQKKRNFRSLWITRINAAARINGLSYSRFMNGLLKAGITLDRKVLADIAVHDAAGFTALAEKAKGALAA.

Belongs to the bacterial ribosomal protein bL20 family.

Functionally, binds directly to 23S ribosomal RNA and is necessary for the in vitro assembly process of the 50S ribosomal subunit. It is not involved in the protein synthesizing functions of that subunit. The polypeptide is Large ribosomal subunit protein bL20 (Xanthomonas oryzae pv. oryzae (strain PXO99A)).